A 594-amino-acid chain; its full sequence is Isocitrate dehydrogenase kinase/phosphatase (594 aa).

Residues 315–321 (APGIRGM) and lysine 336 each bind ATP. Aspartate 371 is an active-site residue.

This sequence belongs to the AceK family.

The protein resides in the cytoplasm. It carries out the reaction L-seryl-[isocitrate dehydrogenase] + ATP = O-phospho-L-seryl-[isocitrate dehydrogenase] + ADP + H(+). In terms of biological role, bifunctional enzyme which can phosphorylate or dephosphorylate isocitrate dehydrogenase (IDH) on a specific serine residue. This is a regulatory mechanism which enables bacteria to bypass the Krebs cycle via the glyoxylate shunt in response to the source of carbon. When bacteria are grown on glucose, IDH is fully active and unphosphorylated, but when grown on acetate or ethanol, the activity of IDH declines drastically concomitant with its phosphorylation. This chain is Isocitrate dehydrogenase kinase/phosphatase, found in Klebsiella pneumoniae (strain 342).